Reading from the N-terminus, the 1083-residue chain is Ubiquitin carboxyl-terminal hydrolase 28 (1083 aa).

Residues 60-82 (DQRVKEPSHDTAATEPSEVEESA) are disordered. Ser-67 bears the Phosphoserine mark. A UIM domain is found at 97–116 (DNKDDLQAAIALSLLESPNI). Lys-99 is covalently cross-linked (Glycyl lysine isopeptide (Lys-Gly) (interchain with G-Cter in SUMO2)). Positions 162–656 (VGLKNVGNTC…SAYCLMYIND (495 aa)) constitute a USP domain. Residue Cys-171 is the Nucleophile of the active site. Position 376 is a phosphoserine (Ser-376). Positions 483–539 (DLTAKESSSPKSCSQNAEGSFSSPEDALPNSEVMNGPFTSPHSSLEMPAPPPAPRTV) are disordered. The span at 487-505 (KESSSPKSCSQNAEGSFSS) shows a compositional bias: polar residues. A Phosphoserine modification is found at Ser-556. His-606 serves as the catalytic Proton acceptor. The tract at residues 703–728 (EEQSCKIPQMESSPNSSSQDFSTSQE) is disordered. Residues 714-728 (SSPNSSSQDFSTSQE) are compositionally biased toward low complexity. Ser-720 is modified (phosphoserine). Thr-1054 bears the Phosphothreonine mark.

The protein belongs to the peptidase C19 family. USP28 subfamily. Interacts with ZNF304. Interacts with PRKD1. Interacts with TP53BP1. Interacts with FBXW7; following DNA damage, dissociates from FBXW7 leading to degradation of MYC. In terms of processing, degraded upon nickel ion level or hypoxia exposure. Post-translationally, phosphorylated upon DNA damage at Ser-67 and Ser-720, by ATM or ATR. Phosphorylated by PRKD1.

The protein localises to the nucleus. It localises to the nucleoplasm. It catalyses the reaction Thiol-dependent hydrolysis of ester, thioester, amide, peptide and isopeptide bonds formed by the C-terminal Gly of ubiquitin (a 76-residue protein attached to proteins as an intracellular targeting signal).. In terms of biological role, deubiquitinase involved in DNA damage response checkpoint and MYC proto-oncogene stability. Involved in DNA damage induced apoptosis by specifically deubiquitinating proteins of the DNA damage pathway such as CLSPN. Also involved in G2 DNA damage checkpoint, by deubiquitinating CLSPN, and preventing its degradation by the anaphase promoting complex/cyclosome (APC/C). In contrast, it does not deubiquitinate PLK1. Specifically deubiquitinates MYC in the nucleoplasm, leading to prevent MYC degradation by the proteasome: acts by specifically interacting with FBXW7 (FBW7alpha) in the nucleoplasm and counteracting ubiquitination of MYC by the SCF(FBXW7) complex. Deubiquitinates ZNF304, hence preventing ZNF304 degradation by the proteasome and leading to the activated KRAS-mediated promoter hypermethylation and transcriptional silencing of tumor suppressor genes (TSGs) in a subset of colorectal cancers (CRC) cells. This is Ubiquitin carboxyl-terminal hydrolase 28 (Usp28) from Rattus norvegicus (Rat).